The chain runs to 388 residues: Transcriptional regulatory protein EmbR (388 aa).

The ompR/PhoB-type DNA-binding region spans 2-105 (AGSATVEKRL…AAPPGYRLSI (104 aa)). The FHA domain maps to 308 to 357 (TRIGRLHDNDIVLDSANVSRHHAVIVDTGTNYVINDLRSSNGVHVQHERI).

Belongs to the AfsR/DnrI/RedD regulatory family. In terms of processing, phosphorylated on threonine residue(s).

Positively regulates the transcription of the embCAB operon. Exhibits ATPase and GTPase activities. This is Transcriptional regulatory protein EmbR (embR) from Mycobacterium bovis (strain ATCC BAA-935 / AF2122/97).